Consider the following 136-residue polypeptide: Large ribosomal subunit protein uL16 (136 aa).

It belongs to the universal ribosomal protein uL16 family. Part of the 50S ribosomal subunit.

In terms of biological role, binds 23S rRNA and is also seen to make contacts with the A and possibly P site tRNAs. In Elusimicrobium minutum (strain Pei191), this protein is Large ribosomal subunit protein uL16.